A 473-amino-acid polypeptide reads, in one-letter code: Putative BTB/POZ domain-containing protein R765 (473 aa).

Residues 2 to 72 (TNIQLVIKDD…KIYDREITAD (71 aa)) enclose the BTB domain.

It belongs to the mimivirus BTB/WD family.

The chain is Putative BTB/POZ domain-containing protein R765 from Acanthamoeba polyphaga mimivirus (APMV).